Consider the following 209-residue polypeptide: Large ribosomal subunit protein uL3 (209 aa).

Residues asparagine 127 to serine 153 are disordered.

Belongs to the universal ribosomal protein uL3 family. In terms of assembly, part of the 50S ribosomal subunit. Forms a cluster with proteins L14 and L19.

Functionally, one of the primary rRNA binding proteins, it binds directly near the 3'-end of the 23S rRNA, where it nucleates assembly of the 50S subunit. This chain is Large ribosomal subunit protein uL3, found in Clostridium perfringens (strain SM101 / Type A).